A 333-amino-acid polypeptide reads, in one-letter code: Ig gamma-2B chain C region (333 aa).

Ig-like domains are found at residues 6 to 96 (PSVY…KKVE), 124 to 223 (PSVF…KTIS), and 232 to 328 (PQVY…KSIS). 3 disulfides stabilise this stretch: Cys27-Cys80, Cys147-Cys207, and Cys253-Cys311.

The chain is Ig gamma-2B chain C region (Igh-1a) from Rattus norvegicus (Rat).